The chain runs to 616 residues: Zinc metalloproteinase nas-36 (616 aa).

The signal sequence occupies residues 1–21 (MRRFCRLLFLNSLLSISICKA). Positions 22–125 (QNPAHLVADE…SKDKTKRLRR (104 aa)) are excised as a propeptide. The 196-residue stretch at 126 to 321 (SFVSDKTATW…VATINTAYCK (196 aa)) folds into the Peptidase M12A domain. Intrachain disulfides connect Cys168/Cys320, Cys191/Cys210, Cys324/Cys345, Cys347/Cys356, Cys367/Cys396, Cys424/Cys444, Cys518/Cys549, Cys522/Cys554, and Cys534/Cys539. Residue Asn173 is glycosylated (N-linked (GlcNAc...) asparagine). A Zn(2+)-binding site is contributed by His218. Glu219 is a catalytic residue. Zn(2+) contacts are provided by His222 and His228. The 42-residue stretch at 316–357 (NTAYCKEECKSEKTECEYGGYMRPSKCSECLCPDGLGGEKCE) folds into the EGF-like domain. Positions 367 to 481 (CGGILELSDE…IGFKIQVRST (115 aa)) constitute a CUB domain. A TSP type-1 domain is found at 506–555 (PNVWADWGEWSMCSRTCGGCGIRSRVRSCRSKKCEGRRQEFGTCNLKACP).

The cofactor is Zn(2+).

It localises to the secreted. Functionally, mtalloprotease. Involved in molting, a process during larval stages in which a new cuticle is formed and the old cuticle is shed. This Caenorhabditis briggsae protein is Zinc metalloproteinase nas-36.